Here is a 676-residue protein sequence, read N- to C-terminus: Ribonuclease R (676 aa).

An RNB domain is found at 207 to 527; the sequence is RKDLRDLLCF…LIVHRLLFNP (321 aa). The S1 motif domain maps to 566-651; that stretch reads NKFLQEQPKT…LTQKIVWSIA (86 aa). The interval 656 to 676 is disordered; it reads DKPKKIKKTPSKKKGTKKRAS. Residues 659–676 are compositionally biased toward basic residues; the sequence is KKIKKTPSKKKGTKKRAS.

The protein belongs to the RNR ribonuclease family. RNase R subfamily.

It localises to the cytoplasm. It carries out the reaction Exonucleolytic cleavage in the 3'- to 5'-direction to yield nucleoside 5'-phosphates.. Functionally, 3'-5' exoribonuclease that releases 5'-nucleoside monophosphates and is involved in maturation of structured RNAs. The polypeptide is Ribonuclease R (Chlamydia pneumoniae (Chlamydophila pneumoniae)).